The chain runs to 93 residues: Bublin coiled-coil protein (93 aa).

2 disordered regions span residues 1–26 (MAGPNGDPHVLGGGTGDEGDEGGDTF) and 74–93 (QQQSKQLNTGADVQGSQPPA). The segment covering 17 to 26 (DEGDEGGDTF) has biased composition (acidic residues). The stretch at 59 to 80 (LKELLESNRQTRLEFQQQSKQL) forms a coiled coil.

The protein belongs to the UPF0184 (EST00098) family.

It is found in the cell junction. The protein localises to the cytoplasm. Its subcellular location is the cytoskeleton. Essential for intermediate filament organization in intestinal cells, interacts with intermediate filament and regulates intestinal lumen morphology. This chain is Bublin coiled-coil protein (BBLN), found in Taeniopygia guttata (Zebra finch).